The chain runs to 277 residues: S-formylglutathione hydrolase FrmB (277 aa).

Active-site charge relay system residues include Ser-145, Asp-221, and His-254.

Belongs to the esterase D family.

The enzyme catalyses S-formylglutathione + H2O = formate + glutathione + H(+). Its function is as follows. Serine hydrolase involved in the detoxification of formaldehyde. Hydrolyzes S-formylglutathione to glutathione and formate. This Escherichia coli O157:H7 protein is S-formylglutathione hydrolase FrmB (frmB).